The following is a 383-amino-acid chain: Bifunctional enzyme IspD/IspF (383 aa).

The 2-C-methyl-D-erythritol 4-phosphate cytidylyltransferase stretch occupies residues 1-226 (MKIAAVIVAA…ERQIMSETIT (226 aa)). Positions 227-383 (VTGQGYDVHR…QAIVTARLTT (157 aa)) are 2-C-methyl-D-erythritol 2,4-cyclodiphosphate synthase. A divalent metal cation contacts are provided by D233 and H235. Residues 233-235 (DVH) and 259-260 (HS) contribute to the 4-CDP-2-C-methyl-D-erythritol 2-phosphate site. H267 contacts a divalent metal cation. 4-CDP-2-C-methyl-D-erythritol 2-phosphate contacts are provided by residues 281-283 (DIG), 357-360 (TTTE), F364, and R367.

It in the N-terminal section; belongs to the IspD/TarI cytidylyltransferase family. IspD subfamily. This sequence in the C-terminal section; belongs to the IspF family. A divalent metal cation is required as a cofactor.

The enzyme catalyses 2-C-methyl-D-erythritol 4-phosphate + CTP + H(+) = 4-CDP-2-C-methyl-D-erythritol + diphosphate. It carries out the reaction 4-CDP-2-C-methyl-D-erythritol 2-phosphate = 2-C-methyl-D-erythritol 2,4-cyclic diphosphate + CMP. The protein operates within isoprenoid biosynthesis; isopentenyl diphosphate biosynthesis via DXP pathway; isopentenyl diphosphate from 1-deoxy-D-xylulose 5-phosphate: step 2/6. It functions in the pathway isoprenoid biosynthesis; isopentenyl diphosphate biosynthesis via DXP pathway; isopentenyl diphosphate from 1-deoxy-D-xylulose 5-phosphate: step 4/6. Bifunctional enzyme that catalyzes the formation of 4-diphosphocytidyl-2-C-methyl-D-erythritol from CTP and 2-C-methyl-D-erythritol 4-phosphate (MEP) (IspD), and catalyzes the conversion of 4-diphosphocytidyl-2-C-methyl-D-erythritol 2-phosphate (CDP-ME2P) to 2-C-methyl-D-erythritol 2,4-cyclodiphosphate (ME-CPP) with a corresponding release of cytidine 5-monophosphate (CMP) (IspF). This is Bifunctional enzyme IspD/IspF from Maricaulis maris (strain MCS10) (Caulobacter maris).